The chain runs to 259 residues: Malonyl-[acyl-carrier protein] O-methyltransferase (259 aa).

It belongs to the methyltransferase superfamily.

It carries out the reaction malonyl-[ACP] + S-adenosyl-L-methionine = malonyl-[ACP] methyl ester + S-adenosyl-L-homocysteine. Its pathway is cofactor biosynthesis; biotin biosynthesis. In terms of biological role, converts the free carboxyl group of a malonyl-thioester to its methyl ester by transfer of a methyl group from S-adenosyl-L-methionine (SAM). It allows to synthesize pimeloyl-ACP via the fatty acid synthetic pathway. The sequence is that of Malonyl-[acyl-carrier protein] O-methyltransferase from Anoxybacillus flavithermus (strain DSM 21510 / WK1).